The chain runs to 1514 residues: ABC transporter C family member 3 (1514 aa).

The next 10 helical transmembrane spans lie at P35–F55, A83–F103, L116–L136, L153–Y173, L183–L203, I325–L345, Y364–F386, W439–Y459, G463–F483, and F551–L571. One can recognise an ABC transmembrane type-1 1 domain in the interval I325–Q606. An ABC transporter 1 domain is found at V640–A863. Position 675–682 (G675–S682) interacts with ATP. The next 5 helical transmembrane spans lie at Y940–F960, L987–L1007, I1077–V1097, L1181–I1201, and L1205–W1225. Residues V950 to N1232 form the ABC transmembrane type-1 2 domain. Residues I1271–A1503 form the ABC transporter 2 domain. G1303–S1310 provides a ligand contact to ATP.

The protein belongs to the ABC transporter superfamily. ABCC family. Conjugate transporter (TC 3.A.1.208) subfamily. As to expression, ubiquitous.

It is found in the membrane. The catalysed reaction is ATP + H2O + xenobioticSide 1 = ADP + phosphate + xenobioticSide 2.. Glutathione-conjugate transport is inhibited by decyl-glutathione and, to a lower extent, by GS-GS, but not by GSH. All transports are inhibited by vanadate. Pump for glutathione S-conjugates. Mediates the transport of glutathione conjugates such as chlorodinitrobenzene-GS (DNB-GS), and of chlorophyll catabolites such as Bn-NCC-1. Also transports heavy metals such as cadmium (Cd). In Arabidopsis thaliana (Mouse-ear cress), this protein is ABC transporter C family member 3 (ABCC3).